The primary structure comprises 561 residues: Carbohydrate sulfotransferase 15 (561 aa).

The Cytoplasmic segment spans residues 1–80 (MRHCINCCIQ…FLRFKKGKRC (80 aa)). Residues 81–101 (SLVFGLIIMTLVMASYILSGA) traverse the membrane as a helical; Signal-anchor for type II membrane protein segment. The Lumenal portion of the chain corresponds to 102-561 (HQELLISSPF…ADEAFAWKTT (460 aa)). Residue 263-267 (KCGTT) participates in 3'-phosphoadenylyl sulfate binding. N364 is a glycosylation site (N-linked (GlcNAc...) asparagine). Positions 392 and 400 each coordinate 3'-phosphoadenylyl sulfate.

The protein belongs to the sulfotransferase 1 family. As to quaternary structure, homodimer; disulfide-linked (Potential). The relevance of homodimerization is however unsure. May interact with phosphorylated proteins in resting B-cells, including HCK. A divalent metal cation serves as cofactor. Glutathione is required as a cofactor. Post-translationally, glycosylated. As to expression, expressed in B-cell-enriched tissues but not in fetal or adult thymus. Expressed in fetal and adult spleen, lymph node, tonsil, bone marrow and peripheral leukocytes. Not expressed in T-cells. In pro-B, pre-B, and mature B-cell lines, it colocalizes with RAG1.

The protein resides in the golgi apparatus membrane. It catalyses the reaction dermatan 4'-sulfate + n 3'-phosphoadenylyl sulfate = dermatan 4',6'-bissulfate + n adenosine 3',5'-bisphosphate + n H(+). It carries out the reaction chondroitin 4'-sulfate + n 3'-phosphoadenylyl sulfate = chondroitin 4',6'-bissulfate + n adenosine 3',5'-bisphosphate + n H(+). Its activity is regulated as follows. Inhibited by phenyl beta-GalNAc(4,6-SO(4)). Its function is as follows. Sulfotransferase that transfers sulfate from 3'-phosphoadenosine 5'-phosphosulfate (PAPS) to the C-6 hydroxyl group of the GalNAc 4-sulfate residue of chondroitin sulfate A and forms chondroitin sulfate E containing GlcA-GalNAc(4,6-SO(4)) repeating units. It also transfers sulfate to a unique non-reducing terminal sequence, GalNAc(4SO4)-GlcA(2SO4)-GalNAc(6SO4), to yield a highly sulfated structure similar to the structure found in thrombomodulin chondroitin sulfate. May also act as a B-cell receptor involved in BCR ligation-mediated early activation that mediate regulatory signals key to B-cell development and/or regulation of B-cell-specific RAG expression; however such results are unclear in vivo. The polypeptide is Carbohydrate sulfotransferase 15 (CHST15) (Homo sapiens (Human)).